Consider the following 274-residue polypeptide: Ribosomal RNA small subunit methyltransferase A (274 aa).

Positions 20, 22, 47, 68, 90, and 110 each coordinate S-adenosyl-L-methionine.

This sequence belongs to the class I-like SAM-binding methyltransferase superfamily. rRNA adenine N(6)-methyltransferase family. RsmA subfamily.

The protein localises to the cytoplasm. The catalysed reaction is adenosine(1518)/adenosine(1519) in 16S rRNA + 4 S-adenosyl-L-methionine = N(6)-dimethyladenosine(1518)/N(6)-dimethyladenosine(1519) in 16S rRNA + 4 S-adenosyl-L-homocysteine + 4 H(+). Specifically dimethylates two adjacent adenosines (A1518 and A1519) in the loop of a conserved hairpin near the 3'-end of 16S rRNA in the 30S particle. May play a critical role in biogenesis of 30S subunits. This is Ribosomal RNA small subunit methyltransferase A from Chlorobaculum parvum (strain DSM 263 / NCIMB 8327) (Chlorobium vibrioforme subsp. thiosulfatophilum).